Here is a 582-residue protein sequence, read N- to C-terminus: TRAF-type zinc finger domain-containing protein 1 (582 aa).

Residue Ala2 is modified to N-acetylalanine. The TRAF-type zinc finger occupies Ile27–Lys103. Position 191 is a phosphoserine (Ser191). The disordered stretch occupies residues Glu217 to Glu236. A phosphoserine mark is found at Ser278, Ser320, Ser326, Ser327, Ser409, Ser415, Ser430, and Ser470. Residues Thr401–Glu582 are disordered. Composition is skewed to polar residues over residues Pro454 to Gly471 and Leu486 to Gln495.

As to quaternary structure, interacts with MAVS, TICAM1, TRAF1, TRAF2, TRAF3. Interacts with TRAF6.

Negative feedback regulator that controls excessive innate immune responses. Regulates both Toll-like receptor 4 (TLR4) and DDX58/RIG1-like helicases (RLH) pathways. May inhibit the LTR pathway by direct interaction with TRAF6 and attenuation of NF-kappa-B activation. May negatively regulate the RLH pathway downstream from MAVS and upstream of NF-kappa-B and IRF3. This chain is TRAF-type zinc finger domain-containing protein 1 (TRAFD1), found in Homo sapiens (Human).